The following is a 510-amino-acid chain: Probable sphingolipid transporter spinster homolog 3 (510 aa).

Residues 44–64 (SSLSPVWLLVIFCIINLLNYM) form a helical membrane-spanning segment. Residues N75 and N98 are each glycosylated (N-linked (GlcNAc...) asparagine). 11 consecutive transmembrane segments (helical) span residues 106–126 (VLSS…ASLA), 136–156 (VWTI…IVLC), 158–178 (MFVG…IDDN), 185–205 (AAWL…GYVY), 219–239 (FWGE…MKPL), 298–318 (VFVV…AYSY), 336–356 (IFGA…GFIL), 369–387 (LLSG…AFTL), 392–414 (GFIA…VNYV), 430–450 (ISTV…VGIV), and 462–482 (LILT…KINL).

Belongs to the major facilitator superfamily. Spinster (TC 2.A.1.49) family.

Its subcellular location is the mitochondrion inner membrane. Its function is as follows. Probable sphingolipid transporter. In Arabidopsis thaliana (Mouse-ear cress), this protein is Probable sphingolipid transporter spinster homolog 3.